Reading from the N-terminus, the 128-residue chain is Small ribosomal subunit protein uS12 (128 aa).

A disordered region spans residues 1–29 (MPTINQLIRKGREPKERKSKSPALMGNPQ). Aspartate 89 is subject to 3-methylthioaspartic acid. Residues 106-128 (GVEGRRQGRSKYGAKRPKEGGKK) are disordered.

This sequence belongs to the universal ribosomal protein uS12 family. In terms of assembly, part of the 30S ribosomal subunit. Contacts proteins S8 and S17. May interact with IF1 in the 30S initiation complex.

In terms of biological role, with S4 and S5 plays an important role in translational accuracy. Interacts with and stabilizes bases of the 16S rRNA that are involved in tRNA selection in the A site and with the mRNA backbone. Located at the interface of the 30S and 50S subunits, it traverses the body of the 30S subunit contacting proteins on the other side and probably holding the rRNA structure together. The combined cluster of proteins S8, S12 and S17 appears to hold together the shoulder and platform of the 30S subunit. The sequence is that of Small ribosomal subunit protein uS12 from Dictyoglomus turgidum (strain DSM 6724 / Z-1310).